The primary structure comprises 429 residues: MKQAWQQYLQIIQQVVKPALGCTEPIAAAYAAAVAARQLGCKPVRLEVVVSDNLYKNSMGVYVPGTGKIGLAIAAAAGAIGGNAEAGLEVLAAITPAQVAEAQELIDAGQVQVSRTSAPEFIYCRVRLLGLDAEGTEHSAEVTLCGGHTRIVEQRCNDEVTFTAEQGQGGATGAICDGVDISIAAIHEFATQVEFEQIRFILQASELNGKLSDEGMNNPYGLEIGRTMQQNIQAGLIGEDVMNRIVMRTAAASDARMGGASLPAMSNFGSGNQGIAATIPVVVIAERFGASEEQLARALIMSHLGAIYIKSHYPPLSAFCGNTVTSAAAAMAMVYLAGGSFEQSCHAIQNVLSDSAGMVCDGAKASCAMKVSTSSGAAVRGFLMALNSHGVSGQGIVAGNVEQTIRNVGQMVKDGMSATDSTIIDIMSA.

This sequence belongs to the UPF0597 family.

This Aeromonas hydrophila subsp. hydrophila (strain ATCC 7966 / DSM 30187 / BCRC 13018 / CCUG 14551 / JCM 1027 / KCTC 2358 / NCIMB 9240 / NCTC 8049) protein is UPF0597 protein AHA_1619.